The following is a 174-amino-acid chain: Putative NADH dehydrogenase/NAD(P)H nitroreductase AF_2267 (174 aa).

107–112 (AARCLG) lines the NAD(+) pocket.

The protein belongs to the nitroreductase family. FMN is required as a cofactor.

This Archaeoglobus fulgidus (strain ATCC 49558 / DSM 4304 / JCM 9628 / NBRC 100126 / VC-16) protein is Putative NADH dehydrogenase/NAD(P)H nitroreductase AF_2267.